We begin with the raw amino-acid sequence, 163 residues long: T-cell surface glycoprotein CD3 zeta chain (163 aa).

The N-terminal stretch at 1–21 is a signal peptide; sequence MKWKALFTAAILQAQLPITEA. Residues 22–30 are Extracellular-facing; the sequence is QSFGLLDPK. Residues 31–51 traverse the membrane as a helical segment; sequence LCYLLDGILFIYGVILTALFL. Residues 52-163 are Cytoplasmic-facing; it reads RVKFSRSADA…ALHMQALPPR (112 aa). Residue S58 is modified to Phosphoserine. ITAM domains are found at residues 61–89, 99–127, and 130–158; these read APAY…LDKR, KPRR…EIGM, and ERRR…LHMQ. Residues Y64, Y72, Y83, Y110, Y122, Y141, and Y152 each carry the phosphotyrosine modification. The segment covering 83-98 has biased composition (basic and acidic residues); sequence YDVLDKRRGRDPEMGG. Residues 83–111 are disordered; it reads YDVLDKRRGRDPEMGGKPRRKNPQEGLYN.

It belongs to the CD3Z/FCER1G family. In terms of assembly, the TCR-CD3 complex is composed of a CD3D/CD3E and a CD3G/CD3E heterodimers that preferentially associate with TCRalpha and TCRbeta, respectively, to form TCRalpha/CD3E/CD3G and TCRbeta/CD3G/CD3E trimers. In turn, the hexamer interacts with CD3Z homodimer to form the TCR-CD3 complex. Alternatively, TCRalpha and TCRbeta can be replaced by TCRgamma and TCRdelta. Interacts with SLA. Interacts with TRAT1. Interacts with DOCK2. Interacts with SLA2. Interacts with SHB. Interacts with ZAP70. Interacts (tyrosine phosphorylated) with SHC1 (via SH2 domain). Interacts with PTPRC. Interacts with CRK; this interaction regulates CD3Z phosphorylation. Interacts (on T cell side) with CD81, ICAM1 and CD9 at immunological synapses between antigen-presenting cells and T cells. Interacts with CD160. Interacts with LY6E. Interacts with LY6E. The signaling subunit of immunoglobulin gamma (IgG) Fc receptor complex. As a homodimer or a heterodimer with FCER1G, associates with the ligand binding subunit FCGR3A (via transmembrane domain); this interaction is a prerequisite for Fc receptor complex expression on the cell surface. Interacts with CD5. Phosphorylated on Tyr residues after T-cell receptor triggering by LCK in association with CD4/CD8.

It is found in the cell membrane. Part of the TCR-CD3 complex present on T-lymphocyte cell surface that plays an essential role in adaptive immune response. When antigen presenting cells (APCs) activate T-cell receptor (TCR), TCR-mediated signals are transmitted across the cell membrane by the CD3 chains CD3D, CD3E, CD3G and CD3Z. All CD3 chains contain immunoreceptor tyrosine-based activation motifs (ITAMs) in their cytoplasmic domain. Upon TCR engagement, these motifs become phosphorylated by Src family protein tyrosine kinases LCK and FYN, resulting in the activation of downstream signaling pathways. CD3Z ITAMs phosphorylation creates multiple docking sites for the protein kinase ZAP70 leading to ZAP70 phosphorylation and its conversion into a catalytically active enzyme. Plays an important role in intrathymic T-cell differentiation. Additionally, participates in the activity-dependent synapse formation of retinal ganglion cells (RGCs) in both the retina and dorsal lateral geniculate nucleus (dLGN). The sequence is that of T-cell surface glycoprotein CD3 zeta chain (CD247) from Sus scrofa (Pig).